The following is a 532-amino-acid chain: MFACLRIGRFIRLGNVTVKSTNLVLRCVFIRNFATHADHLFDELPQRDLSSLNSQLSSHLRSGNPNDTLALFLQIHRASPDLSSHTFTPVLGACSLLSYPETGRQVHALMIKQGAETGTISKTALIDMYSKYGHLVDSVRVFESVEEKDLVSWNALLSGFLRNGKGKEALGVFAAMYRERVEISEFTLSSVVKTCASLKILQQGKQVHAMVVVTGRDLVVLGTAMISFYSSVGLINEAMKVYNSLNVHTDEVMLNSLISGCIRNRNYKEAFLLMSRQRPNVRVLSSSLAGCSDNSDLWIGKQIHCVALRNGFVSDSKLCNGLMDMYGKCGQIVQARTIFRAIPSKSVVSWTSMIDAYAVNGDGVKALEIFREMCEEGSGVLPNSVTFLVVISACAHAGLVKEGKECFGMMKEKYRLVPGTEHYVCFIDILSKAGETEEIWRLVERMMENDNQSIPCAIWVAVLSACSLNMDLTRGEYVARRLMEETGPENASIYVLVSNFYAAMGKWDVVEELRGKLKNKGLVKTAGHSLFI.

The transit peptide at Met-1–Phe-33 directs the protein to the mitochondrion. PPR repeat units lie at residues Asp-48 to Leu-82, Ser-83 to Thr-117, Gly-118 to Lys-148, Asp-149 to Ile-183, Ser-184 to Leu-218, Thr-223 to His-248, Asp-250 to Asn-280, Val-281 to Ser-314, Asp-315 to Lys-345, Ser-346 to Val-380, Asn-383 to Lys-413, and Gly-419 to Ser-453. The segment at Ile-458–Ile-532 is type E motif; degenerate.

It belongs to the PPR family. PCMP-E subfamily.

It localises to the mitochondrion. This chain is Pentatricopeptide repeat-containing protein At5g66500, mitochondrial (PCMP-E38), found in Arabidopsis thaliana (Mouse-ear cress).